The sequence spans 579 residues: Arginine--tRNA ligase (579 aa).

A 'HIGH' region motif is present at residues 123 to 133; sequence PNLAKEMHVGH.

Belongs to the class-I aminoacyl-tRNA synthetase family. As to quaternary structure, monomer.

It localises to the cytoplasm. The catalysed reaction is tRNA(Arg) + L-arginine + ATP = L-arginyl-tRNA(Arg) + AMP + diphosphate. This Saccharophagus degradans (strain 2-40 / ATCC 43961 / DSM 17024) protein is Arginine--tRNA ligase.